Reading from the N-terminus, the 158-residue chain is Crossover junction endodeoxyribonuclease RuvC (158 aa).

Catalysis depends on residues Asp-7, Glu-67, and Asp-139. Asp-7, Glu-67, and Asp-139 together coordinate Mg(2+).

Belongs to the RuvC family. In terms of assembly, homodimer which binds Holliday junction (HJ) DNA. The HJ becomes 2-fold symmetrical on binding to RuvC with unstacked arms; it has a different conformation from HJ DNA in complex with RuvA. In the full resolvosome a probable DNA-RuvA(4)-RuvB(12)-RuvC(2) complex forms which resolves the HJ. Mg(2+) serves as cofactor.

It localises to the cytoplasm. It catalyses the reaction Endonucleolytic cleavage at a junction such as a reciprocal single-stranded crossover between two homologous DNA duplexes (Holliday junction).. Its function is as follows. The RuvA-RuvB-RuvC complex processes Holliday junction (HJ) DNA during genetic recombination and DNA repair. Endonuclease that resolves HJ intermediates. Cleaves cruciform DNA by making single-stranded nicks across the HJ at symmetrical positions within the homologous arms, yielding a 5'-phosphate and a 3'-hydroxyl group; requires a central core of homology in the junction. The consensus cleavage sequence is 5'-(A/T)TT(C/G)-3'. Cleavage occurs on the 3'-side of the TT dinucleotide at the point of strand exchange. HJ branch migration catalyzed by RuvA-RuvB allows RuvC to scan DNA until it finds its consensus sequence, where it cleaves and resolves the cruciform DNA. This chain is Crossover junction endodeoxyribonuclease RuvC, found in Prochlorococcus marinus (strain MIT 9211).